The primary structure comprises 602 residues: Elongation factor 4 (602 aa).

Residues 7–189 (RNIRNFSIIA…AIVHRIPPPK (183 aa)) form the tr-type G domain. GTP is bound by residues 19–24 (DHGKST) and 136–139 (NKID).

The protein belongs to the TRAFAC class translation factor GTPase superfamily. Classic translation factor GTPase family. LepA subfamily.

It is found in the cell inner membrane. It catalyses the reaction GTP + H2O = GDP + phosphate + H(+). Its function is as follows. Required for accurate and efficient protein synthesis under certain stress conditions. May act as a fidelity factor of the translation reaction, by catalyzing a one-codon backward translocation of tRNAs on improperly translocated ribosomes. Back-translocation proceeds from a post-translocation (POST) complex to a pre-translocation (PRE) complex, thus giving elongation factor G a second chance to translocate the tRNAs correctly. Binds to ribosomes in a GTP-dependent manner. This chain is Elongation factor 4, found in Stenotrophomonas maltophilia (strain R551-3).